The sequence spans 414 residues: 2,3-diketo-5-methylthiopentyl-1-phosphate enolase (414 aa).

The active-site Proton acceptor is the lysine 99. Residues lysine 148, 174–177, histidine 265, glycine 338, and 360–361 contribute to the substrate site; these read KDDE and GG. Positions 174, 176, and 177 each coordinate Mg(2+). Lysine 174 carries the N6-carboxylysine modification.

Belongs to the RuBisCO large chain family. Type IV subfamily. As to quaternary structure, homodimer. Mg(2+) is required as a cofactor.

It carries out the reaction 5-methylsulfanyl-2,3-dioxopentyl phosphate = 2-hydroxy-5-methylsulfanyl-3-oxopent-1-enyl phosphate. Its pathway is amino-acid biosynthesis; L-methionine biosynthesis via salvage pathway; L-methionine from S-methyl-5-thio-alpha-D-ribose 1-phosphate: step 3/6. Catalyzes the enolization of 2,3-diketo-5-methylthiopentyl-1-phosphate (DK-MTP-1-P) into 2-hydroxy-3-keto-5-methylthiopentenyl-1-phosphate (HK-MTPenyl-1-P). In Bacillus cereus (strain AH820), this protein is 2,3-diketo-5-methylthiopentyl-1-phosphate enolase.